The following is a 126-amino-acid chain: Glycine cleavage system H protein (126 aa).

Positions 19–100 constitute a Lipoyl-binding domain; sequence DGKIGITDHA…AHAAWMVKVE (82 aa). N6-lipoyllysine is present on Lys60.

The protein belongs to the GcvH family. As to quaternary structure, the glycine cleavage system is composed of four proteins: P, T, L and H. The cofactor is (R)-lipoate.

The glycine cleavage system catalyzes the degradation of glycine. The H protein shuttles the methylamine group of glycine from the P protein to the T protein. The chain is Glycine cleavage system H protein from Koribacter versatilis (strain Ellin345).